Consider the following 176-residue polypeptide: Ribosome maturation factor RimM (176 aa).

Positions 99-174 (KNEFYITDLI…IVLIQPEIWN (76 aa)) constitute a PRC barrel domain.

It belongs to the RimM family. As to quaternary structure, binds ribosomal protein uS19.

Its subcellular location is the cytoplasm. An accessory protein needed during the final step in the assembly of 30S ribosomal subunit, possibly for assembly of the head region. Essential for efficient processing of 16S rRNA. May be needed both before and after RbfA during the maturation of 16S rRNA. It has affinity for free ribosomal 30S subunits but not for 70S ribosomes. The chain is Ribosome maturation factor RimM from Leptospira interrogans serogroup Icterohaemorrhagiae serovar copenhageni (strain Fiocruz L1-130).